The primary structure comprises 319 residues: Vomeronasal type-1 receptor 51 (319 aa).

Topologically, residues 1–31 (MNEILFFSPQPLFSHMMNENSRVHTHSNLRH) are extracellular. Residues 32 to 52 (IFFSEIGIGISGNSFLLLFHI) traverse the membrane as a helical segment. Topologically, residues 53 to 65 (LKFIHGHRSRLSD) are cytoplasmic. A helical membrane pass occupies residues 66-86 (LPIGLLSLIHLLMLLVMAFIA). Over 87–109 (TDIFISWRGWDDIICKFLVYLYR) the chain is Extracellular. Cysteine 101 and cysteine 188 are oxidised to a cystine. A helical transmembrane segment spans residues 110 to 130 (VLRGLSLCTTSMLSVLQAIIL). At 131–150 (SPRSSCLAKFKRKSLHHISC) the chain is on the cytoplasmic side. Residues 151–171 (AILFLSVLYMLIGSQLLVSII) form a helical membrane-spanning segment. Over 172–203 (ATPNLTTNDFIYVTQSCSILPLSYVMQSMFST) the chain is Extracellular. N-linked (GlcNAc...) asparagine glycosylation is present at asparagine 175. The helical transmembrane segment at 204-224 (LLVIRDVFLISLMVLSTWYMV) threads the bilayer. The Cytoplasmic segment spans residues 225 to 254 (ALLCRHRKKTQHLQGISLSPKTSPKQRATQ). A helical transmembrane segment spans residues 255–275 (TLLMLMSFFVLMTIYDTIVSC). At 276-285 (SRTMFLNDPT) the chain is on the extracellular side. A helical membrane pass occupies residues 286–306 (SYNMQIFVVHIYATVSPFVFM). The Cytoplasmic segment spans residues 307 to 319 (STEKHIVNCLRSV).

The protein belongs to the G-protein coupled receptor 1 family. In terms of tissue distribution, expressed in a subset of sensory neurons located in the apical layer of the vomeronasal organ.

It localises to the cell membrane. Its function is as follows. Putative pheromone receptor implicated in the regulation of social as well as reproductive behavior. The chain is Vomeronasal type-1 receptor 51 (Vmn1r51) from Mus musculus (Mouse).